Reading from the N-terminus, the 559-residue chain is Probable D-2-hydroxyglutarate dehydrogenase, mitochondrial (559 aa).

The N-terminal 80 residues, 1–80 (MARRAAAGLL…MNFEVQKRSF (80 aa)), are a transit peptide targeting the mitochondrion. Residues 131 to 310 (YKGSSQLLLL…TKIAILTPAK (180 aa)) enclose the FAD-binding PCMH-type domain.

It belongs to the FAD-binding oxidoreductase/transferase type 4 family. Homodimer. The cofactor is FAD.

Its subcellular location is the mitochondrion. It catalyses the reaction (R)-2-hydroxyglutarate + A = 2-oxoglutarate + AH2. In terms of biological role, catalyzes the oxidation of D-2-hydroxyglutarate to alpha-ketoglutarate. This Oryza sativa subsp. japonica (Rice) protein is Probable D-2-hydroxyglutarate dehydrogenase, mitochondrial (D2HGDH).